A 286-amino-acid polypeptide reads, in one-letter code: Pyridoxine 4-dehydrogenase (286 aa).

Catalysis depends on Y59, which acts as the Proton donor. 210–218 (FPLGGFTPL) provides a ligand contact to NADP(+).

The protein belongs to the aldo/keto reductase family. Aldo/keto reductase 2 subfamily.

It carries out the reaction pyridoxine + NADP(+) = pyridoxal + NADPH + H(+). The enzyme catalyses pyridoxine + NAD(+) = pyridoxal + NADH + H(+). Catalyzes the NAD(P)H-dependent reduction of pyridoxal to pyridoxine in vitro. Is not able to reduce 4-pyridoxate, and to oxidize pyridoxine or pyridoxamine. Has Kemp eliminase activity towards the non-physiological substrate 5-nitrobenzisoxazole, producing 4-nitro-2-cyanophenol; this activity is not considered to be physiologically relevant. The polypeptide is Pyridoxine 4-dehydrogenase (Escherichia coli (strain K12)).